We begin with the raw amino-acid sequence, 548 residues long: Chaperonin GroEL (548 aa).

ATP is bound by residues 30–33 (TLGP), K51, 87–91 (DGTTT), G415, 479–481 (NAA), and D495.

This sequence belongs to the chaperonin (HSP60) family. In terms of assembly, forms a cylinder of 14 subunits composed of two heptameric rings stacked back-to-back. Interacts with the co-chaperonin GroES.

Its subcellular location is the cytoplasm. It carries out the reaction ATP + H2O + a folded polypeptide = ADP + phosphate + an unfolded polypeptide.. In terms of biological role, together with its co-chaperonin GroES, plays an essential role in assisting protein folding. The GroEL-GroES system forms a nano-cage that allows encapsulation of the non-native substrate proteins and provides a physical environment optimized to promote and accelerate protein folding. This Serratia proteamaculans (strain 568) protein is Chaperonin GroEL.